The chain runs to 465 residues: ATP synthase subunit beta (465 aa).

Residue Gly-148–Thr-155 coordinates ATP.

This sequence belongs to the ATPase alpha/beta chains family. As to quaternary structure, F-type ATPases have 2 components, CF(1) - the catalytic core - and CF(0) - the membrane proton channel. CF(1) has five subunits: alpha(3), beta(3), gamma(1), delta(1), epsilon(1). CF(0) has three main subunits: a(1), b(2) and c(9-12). The alpha and beta chains form an alternating ring which encloses part of the gamma chain. CF(1) is attached to CF(0) by a central stalk formed by the gamma and epsilon chains, while a peripheral stalk is formed by the delta and b chains.

It is found in the cell inner membrane. The catalysed reaction is ATP + H2O + 4 H(+)(in) = ADP + phosphate + 5 H(+)(out). Produces ATP from ADP in the presence of a proton gradient across the membrane. The catalytic sites are hosted primarily by the beta subunits. In Neisseria meningitidis serogroup C (strain 053442), this protein is ATP synthase subunit beta.